Here is an 891-residue protein sequence, read N- to C-terminus: DNA mismatch repair protein MutS (891 aa).

639–646 lines the ATP pocket; the sequence is GPNMAGKS. A disordered region spans residues 827–854; the sequence is TIQEARPSAQGSEEKTPSSPAEKGLSLF.

It belongs to the DNA mismatch repair MutS family.

Its function is as follows. This protein is involved in the repair of mismatches in DNA. It is possible that it carries out the mismatch recognition step. This protein has a weak ATPase activity. This chain is DNA mismatch repair protein MutS, found in Treponema denticola (strain ATCC 35405 / DSM 14222 / CIP 103919 / JCM 8153 / KCTC 15104).